A 142-amino-acid chain; its full sequence is 3-hydroxyacyl-[acyl-carrier-protein] dehydratase FabZ (142 aa).

Residue H41 is part of the active site.

It belongs to the thioester dehydratase family. FabZ subfamily.

The protein localises to the cytoplasm. The enzyme catalyses a (3R)-hydroxyacyl-[ACP] = a (2E)-enoyl-[ACP] + H2O. Involved in unsaturated fatty acids biosynthesis. Catalyzes the dehydration of short chain beta-hydroxyacyl-ACPs and long chain saturated and unsaturated beta-hydroxyacyl-ACPs. This chain is 3-hydroxyacyl-[acyl-carrier-protein] dehydratase FabZ, found in Symbiobacterium thermophilum (strain DSM 24528 / JCM 14929 / IAM 14863 / T).